The primary structure comprises 258 residues: Tritrans,polycis-undecaprenyl-diphosphate synthase (geranylgeranyl-diphosphate specific) (258 aa).

The active site involves Asp37. Asp37 is a binding site for Mg(2+). Substrate contacts are provided by residues 38–41 (GNRR), His54, and 82–84 (STE). Asn85 functions as the Proton acceptor in the catalytic mechanism. Residues Phe86, Arg88, Arg207, and 213-215 (RIS) contribute to the substrate site. Glu226 contacts Mg(2+).

This sequence belongs to the UPP synthase family. Homodimer. It depends on Mg(2+) as a cofactor.

It catalyses the reaction geranylgeranyl diphosphate + 7 isopentenyl diphosphate = tri-trans,hepta-cis-undecaprenyl diphosphate + 7 diphosphate. In terms of biological role, catalyzes the sequential condensation of isopentenyl diphosphate (IPP) with geranylgeranyl diphosphate (GGPP) to yield (2Z,6Z,10Z,14Z,18Z,22Z,26Z,30E,34E,38E)-undecaprenyl diphosphate (tritrans,heptacis-UPP). It is probably the precursor of glycosyl carrier lipids. The sequence is that of Tritrans,polycis-undecaprenyl-diphosphate synthase (geranylgeranyl-diphosphate specific) from Thermoplasma volcanium (strain ATCC 51530 / DSM 4299 / JCM 9571 / NBRC 15438 / GSS1).